We begin with the raw amino-acid sequence, 129 residues long: Acetophenone carboxylase beta subunit (129 aa).

As to quaternary structure, acetophenone carboxylase consists of five subunits; a heterooctameric subcomplex of two alpha (Apc1), two beta (Apc2), two gamma (Apc3) and two delta (Apc4) subunits assembles with the epsilon (Apc5) subunit in an unknown stoichiometry. The cofactor is Mg(2+). It depends on Mn(2+) as a cofactor.

It is found in the cytoplasm. The catalysed reaction is acetophenone + hydrogencarbonate + 2 ATP + H2O = 3-oxo-3-phenylpropanoate + 2 ADP + 2 phosphate + 2 H(+). Inhibited by zinc ions, carbamoylphosphate and beta,gamma-imido-ATP. Functionally, catalyzes the carboxylation of acetophenone to form 3-oxo-3-phenylpropanoate (benzoylacetate) in the anaerobic catabolism of ethylbenzene. Also carboxylates propiophenone at the same rate and 4-acetyl-pyridine at lower rates. The chain is Acetophenone carboxylase beta subunit (apc2) from Aromatoleum aromaticum (strain DSM 19018 / LMG 30748 / EbN1) (Azoarcus sp. (strain EbN1)).